A 261-amino-acid chain; its full sequence is uncharacterized protein (261 aa).

The next 5 helical transmembrane spans lie at 38-58 (FIYLILGGFGFYQPSNLITLL), 134-154 (YTLMVSLVAIFQCLISLLALI), 163-183 (ILINLSLTLNFFLLLFNTYVL), 195-215 (YMGLIVSYIISLLDFSALFFL), and 219-239 (HKSVLSVISSIFSFFLMCLKV).

Its subcellular location is the membrane. This is an uncharacterized protein from Dictyostelium discoideum (Social amoeba).